Here is a 227-residue protein sequence, read N- to C-terminus: Ribonuclease 3 (227 aa).

In terms of domain architecture, RNase III spans 5 to 127; it reads YQKLSRRIGY…IIGAMYLDAG (123 aa). Glutamate 40 is a Mg(2+) binding site. The active site involves aspartate 44. The Mg(2+) site is built by aspartate 113 and glutamate 116. The active site involves glutamate 116. In terms of domain architecture, DRBM spans 154–224; that stretch reads DAKTRLQEFL…AAKALKKLEK (71 aa).

Belongs to the ribonuclease III family. In terms of assembly, homodimer. Mg(2+) serves as cofactor.

The protein resides in the cytoplasm. It carries out the reaction Endonucleolytic cleavage to 5'-phosphomonoester.. Digests double-stranded RNA. Involved in the processing of primary rRNA transcript to yield the immediate precursors to the large and small rRNAs (23S and 16S). Processes some mRNAs, and tRNAs when they are encoded in the rRNA operon. Processes pre-crRNA and tracrRNA of type II CRISPR loci if present in the organism. This Marinomonas sp. (strain MWYL1) protein is Ribonuclease 3.